A 400-amino-acid chain; its full sequence is 3-phenylpropionate/cinnamic acid dioxygenase ferredoxin--NAD(+) reductase component (400 aa).

5–36 (TIIIVGGGQAAAMAAASLRQQGFTGELHLFSD) contacts FAD. Residue 146–174 (SVVIIGAGTIGLELAASATQRRCKVTVIE) participates in NAD(+) binding.

It belongs to the bacterial ring-hydroxylating dioxygenase ferredoxin reductase family. As to quaternary structure, this dioxygenase system consists of four proteins: the two subunits of the hydroxylase component (HcaE and HcaF), a ferredoxin (HcaC) and a ferredoxin reductase (HcaD). Requires FAD as cofactor.

It carries out the reaction 2 reduced [2Fe-2S]-[ferredoxin] + NAD(+) + H(+) = 2 oxidized [2Fe-2S]-[ferredoxin] + NADH. It functions in the pathway aromatic compound metabolism; 3-phenylpropanoate degradation. Its function is as follows. Part of the multicomponent 3-phenylpropionate dioxygenase, that converts 3-phenylpropionic acid (PP) and cinnamic acid (CI) into 3-phenylpropionate-dihydrodiol (PP-dihydrodiol) and cinnamic acid-dihydrodiol (CI-dihydrodiol), respectively. This is 3-phenylpropionate/cinnamic acid dioxygenase ferredoxin--NAD(+) reductase component from Escherichia coli (strain K12 / MC4100 / BW2952).